The chain runs to 237 residues: Opacity protein opA57 (237 aa).

A signal peptide is located at residue Ala1.

The protein belongs to the opacity porin family.

It localises to the cell outer membrane. Implicated in a number of adherence functions. OPA proteins are implicated in pathogenesis and are subject to phase variation. The sequence is that of Opacity protein opA57 (opaK) from Neisseria gonorrhoeae.